A 327-amino-acid chain; its full sequence is MPALLERPKLSNAMARALHRHIMMERERKRQEEEEVDKMMEQKMKEEQERRKKKEMEERMSLEETKEQILKLQEKLSALQEEKHQLFLQLKKVLHEEEKRRRKEQSDLTTLTSAAYQQSLTVHTGTHLLSMQGSPGGHNRPGTLMAADRAKQMFGPQVLTTRHYVGSAAAFAGTPEHGQFQGSPGGAYGTAQPPPHYGPTQPAYSPSQQLRAPSAFPAVQYLSQPQPQPYAVHGHFQPTQTGFLQPGSTLSLQKQMEHANQQTSFSDSSSLRPMHPQALHPAPGLLASPQLPVQIQAAGKSGFATTSQPGPRLPFIQHSQNPRFYHK.

Residues 14 to 109 (MARALHRHIM…RRRKEQSDLT (96 aa)) adopt a coiled-coil conformation. Positions 26–65 (RERKRQEEEEVDKMMEQKMKEEQERRKKKEMEERMSLEET) are disordered. Residues K45 and K71 each participate in a glycyl lysine isopeptide (Lys-Gly) (interchain with G-Cter in SUMO1) cross-link. The segment at 61–94 (SLEETKEQILKLQEKLSALQEEKHQLFLQLKKVL) is interaction with SUMO. Disordered stretches follow at residues 178–208 (GQFQGSPGGAYGTAQPPPHYGPTQPAYSPSQ), 253–285 (QKQMEHANQQTSFSDSSSLRPMHPQALHPAPGL), and 300–327 (KSGFATTSQPGPRLPFIQHSQNPRFYHK). Residues 253-271 (QKQMEHANQQTSFSDSSSL) are compositionally biased toward polar residues. Position 312 is an asymmetric dimethylarginine (R312). Over residues 317–327 (QHSQNPRFYHK) the composition is skewed to polar residues. R323 carries the post-translational modification Asymmetric dimethylarginine; alternate. Position 323 is an omega-N-methylarginine; alternate (R323).

Component of the N-Cor repressor complex, at least composed of NCOR1, NCOR2, HDAC3, TBL1X, TBL1R, CORO2A and GPS2. Interacts (when sumoylated at Lys-71) with TBL1X; leading to protect GPS2 from degradation by the proteasome. Interacts with UBE2N; leading to inhibit UBE2N/Ubc13 activity. Interacts with TRAF1. Interacts with TRAF2. Interacts with TRAF6. Interacts with PPARG (when in the liganded conformation). Interacts with (sumoylated) NR1H2; interaction with sumoylated NR1H2 and NR5A2 onto hepatic acute phase protein promoters prevents N-Cor corepressor complex dissociation. Interacts with (sumoylated) NR5A2; interaction with sumoylated NR1H2 and NR5A2 onto hepatic acute phase protein promoters prevents N-Cor corepressor complex dissociation. Interacts with NR1H3. Interacts with RFX4. Interacts with ANKRD26. In terms of processing, sumoylation regulates its subcellular location. Sumoylation at Lys-45 and Lys-71 regulates the shuttling between the cytoplasm and the nucleus. Sumoylation at Lys-71 is required for interaction with TBL1X. Sumoylated at Lys-45 and Lys-71 in mitochondrion. Desumoylation by SENP1 leads to relocation from the mitochondria to the nucleus. Post-translationally, ubiquitinated at the C-terminus by SIAH2; leading to its degradation by the proteasome. Interaction with TBL1X and methylation at Arg-323 protect GPS2 against ubiquitination and degradation. Methylated at Arg-312 and Arg-323 by PRMT6. Methylation at Arg-323 protects from degradation by the proteasome.

The protein localises to the nucleus. Its subcellular location is the mitochondrion. It is found in the cytoplasm. The protein resides in the cytosol. Key regulator of inflammation, lipid metabolism and mitochondrion homeostasis that acts by inhibiting the activity of the ubiquitin-conjugating enzyme UBE2N/Ubc13, thereby inhibiting 'Lys-63'-linked ubiquitination. In the nucleus, can both acts as a corepressor and coactivator of transcription, depending on the context. Acts as a transcription coactivator in adipocytes by promoting the recruitment of PPARG to promoters: acts by inhibiting the activity of the ubiquitin-conjugating enzyme UBE2N/Ubc13, leading to stabilization of KDM4A and subsequent histone H3 'Lys-9' (H3K9) demethylation. Promotes cholesterol efflux by acting as a transcription coactivator. Acts as a regulator of B-cell development by inhibiting UBE2N/Ubc13, thereby restricting the activation of Toll-like receptors (TLRs) and B-cell antigen receptors (BCRs) signaling pathways. Acts as a key mediator of mitochondrial stress response: in response to mitochondrial depolarization, relocates from the mitochondria to the nucleus following desumoylation and specifically promotes expression of nuclear-encoded mitochondrial genes. Promotes transcription of nuclear-encoded mitochondrial genes by inhibiting UBE2N/Ubc13. Can also act as a corepressor as part of the N-Cor repressor complex by repressing active PPARG. Plays an anti-inflammatory role in macrophages and is required for insulin sensitivity by acting as a corepressor. Plays an anti-inflammatory role during the hepatic acute phase response by interacting with sumoylated NR1H2 and NR5A2 proteins, thereby preventing N-Cor corepressor complex dissociation. In the cytosol, also plays a non-transcriptional role by regulating insulin signaling and pro-inflammatory pathways. In the cytoplasm, acts as a negative regulator of inflammation by inhibiting the pro-inflammatory TNF-alpha pathway; acts by repressing UBE2N/Ubc13 activity. In the cytoplasm of adipocytes, restricts the activation of insulin signaling via inhibition of UBE2N/Ubc13-mediated ubiquitination of AKT. Able to suppress G-protein- and mitogen-activated protein kinase-mediated signal transduction. The chain is G protein pathway suppressor 2 from Mus musculus (Mouse).